The primary structure comprises 318 residues: Probable tyrosine phosphatase protein N1 (318 aa).

In terms of domain architecture, Tyrosine-protein phosphatase spans Ile-26–Leu-292. Cys-233 functions as the Phosphocysteine intermediate in the catalytic mechanism.

It belongs to the protein-tyrosine phosphatase family.

The enzyme catalyses O-phospho-L-tyrosyl-[protein] + H2O = L-tyrosyl-[protein] + phosphate. In Microplitis demolitor bracovirus (isolate Webb) (MdBV), this protein is Probable tyrosine phosphatase protein N1 (N3).